A 360-amino-acid polypeptide reads, in one-letter code: Phosphoserine aminotransferase (360 aa).

Residue Arg-42 participates in L-glutamate binding. Positions 102, 152, 171, and 194 each coordinate pyridoxal 5'-phosphate. The residue at position 195 (Lys-195) is an N6-(pyridoxal phosphate)lysine. 237–238 (NT) is a pyridoxal 5'-phosphate binding site.

It belongs to the class-V pyridoxal-phosphate-dependent aminotransferase family. SerC subfamily. As to quaternary structure, homodimer. The cofactor is pyridoxal 5'-phosphate.

Its subcellular location is the cytoplasm. It catalyses the reaction O-phospho-L-serine + 2-oxoglutarate = 3-phosphooxypyruvate + L-glutamate. The enzyme catalyses 4-(phosphooxy)-L-threonine + 2-oxoglutarate = (R)-3-hydroxy-2-oxo-4-phosphooxybutanoate + L-glutamate. The protein operates within amino-acid biosynthesis; L-serine biosynthesis; L-serine from 3-phospho-D-glycerate: step 2/3. Its pathway is cofactor biosynthesis; pyridoxine 5'-phosphate biosynthesis; pyridoxine 5'-phosphate from D-erythrose 4-phosphate: step 3/5. In terms of biological role, catalyzes the reversible conversion of 3-phosphohydroxypyruvate to phosphoserine and of 3-hydroxy-2-oxo-4-phosphonooxybutanoate to phosphohydroxythreonine. The protein is Phosphoserine aminotransferase of Coxiella burnetii (strain RSA 331 / Henzerling II).